The chain runs to 198 residues: Integrator complex subunit 8-like protein (198 aa).

Belongs to the Integrator subunit 8 family. In terms of assembly, component of the Integrator complex. The core complex associates with protein phosphatase 2A subunits, to form the Integrator-PP2A (INTAC) complex.

Its subcellular location is the nucleus. It is found in the chromosome. Functionally, component of the integrator complex, a multiprotein complex that terminates RNA polymerase II (Pol II) transcription in the promoter-proximal region of genes. The integrator complex provides a quality checkpoint during transcription elongation by driving premature transcription termination of transcripts that are unfavorably configured for transcriptional elongation: the complex terminates transcription by (1) catalyzing dephosphorylation of the C-terminal domain (CTD) of Pol II subunit polr2a, (2) degrading the exiting nascent RNA transcript via endonuclease activity and (3) promoting the release of Pol II from bound DNA. The integrator complex is also involved in terminating the synthesis of non-coding Pol II transcripts, such as enhancer RNAs (eRNAs), small nuclear RNAs (snRNAs), telomerase RNAs and long non-coding RNAs (lncRNAs). Within the integrator complex, INTS8 is required for the recruitment of protein phosphatase 2A (PP2A) to transcription pause-release checkpoint. In Dictyostelium discoideum (Social amoeba), this protein is Integrator complex subunit 8-like protein.